The sequence spans 172 residues: NADH-ubiquinone oxidoreductase chain 6 (172 aa).

Transmembrane regions (helical) follow at residues 1–21, 26–48, 52–74, 86–106, and 147–167; these read MTNYMFILSLLFLTGCLGLAL, IYGGLGLIVSGCIGCLMVLGFGG, GLMVFLIYLGGMLVVFGYTTAMA, WFIFSFFVLGLFMELVVFYLF, and CATWMMVVAGWSLFAGIFIII.

This sequence belongs to the complex I subunit 6 family. Core subunit of respiratory chain NADH dehydrogenase (Complex I) which is composed of 45 different subunits.

It localises to the mitochondrion inner membrane. The enzyme catalyses a ubiquinone + NADH + 5 H(+)(in) = a ubiquinol + NAD(+) + 4 H(+)(out). Functionally, core subunit of the mitochondrial membrane respiratory chain NADH dehydrogenase (Complex I) which catalyzes electron transfer from NADH through the respiratory chain, using ubiquinone as an electron acceptor. Essential for the catalytic activity and assembly of complex I. This is NADH-ubiquinone oxidoreductase chain 6 from Rattus norvegicus (Rat).